Here is a 208-residue protein sequence, read N- to C-terminus: Small ribosomal subunit protein uS4 (208 aa).

Positions 30–49 are disordered; it reads KSALEKRPYPPGQHGQRRSK. Residues 98-161 form the S4 RNA-binding domain; sequence RRLDNVVYRM…KNNPQIQRSL (64 aa).

It belongs to the universal ribosomal protein uS4 family. As to quaternary structure, part of the 30S ribosomal subunit. Contacts protein S5. The interaction surface between S4 and S5 is involved in control of translational fidelity.

Its function is as follows. One of the primary rRNA binding proteins, it binds directly to 16S rRNA where it nucleates assembly of the body of the 30S subunit. Functionally, with S5 and S12 plays an important role in translational accuracy. The polypeptide is Small ribosomal subunit protein uS4 (Nitratiruptor sp. (strain SB155-2)).